The sequence spans 640 residues: MPIITLPDGNKKKFDQPVTIMEVAESLGPGLAKAAIAGRVNGVLLDTCIPIEKDSEVNIITAKDQDGIETIRHSFAHLIGHAVKQLYPEAKMAIGPVIEDGFYYDIAYDQPFTPKDLEAIEARMKELVKLDYDVNVEIVSREEAHKEFEKRCEPYKIEIVDEIPENEIIKLYRHQEYTDMCRGPHVPNTRHLRTFKLMKVSGAYWRGDSNKTMLQRIYGTAWGSSKELKAYLKRLEEAEKRDHRRIAKQMSLFHTQEEAPGMIFWHAKGWAIYQVLEQYIRETLSLHAYQEIRTPQVVDRSLWEKSGHWEKFKDDMFTTTSENREYAIKPMNCPCHVQIFNQGLKSYRDLPIRLAEFGSCLRNEPSGSLHGLMRVRNFVQDDAHIFCTELQVQEEVSKFIDLVFEIYRSFGFDSVLIKLSTRPEKRVGSDEIWDKSEKALSDALDAKGLAWDLLPGEGAFYGPKIEFSLKDCLGRVWQCGTIQVDFSMPERLGASYVAEDSQRRTPVMLHRAILGSFERFIGILIEHYAGRMPVWLAPVQVAVMGITDRNAQTCQDVCKKLSALEYRTEVDLRNEKIGFKVREHTLQRVPFLIIIGDKEQQSGEVAVRTREGKDFGSMPLNSFISLLDEAIALKGRSGVS.

The region spanning 1 to 61 (MPIITLPDGN…EKDSEVNIIT (61 aa)) is the TGS domain. Positions 242–533 (DHRRIAKQMS…LIEHYAGRMP (292 aa)) are catalytic. Residues cysteine 333, histidine 384, and histidine 510 each coordinate Zn(2+).

Belongs to the class-II aminoacyl-tRNA synthetase family. Homodimer. It depends on Zn(2+) as a cofactor.

The protein localises to the cytoplasm. The enzyme catalyses tRNA(Thr) + L-threonine + ATP = L-threonyl-tRNA(Thr) + AMP + diphosphate + H(+). Catalyzes the attachment of threonine to tRNA(Thr) in a two-step reaction: L-threonine is first activated by ATP to form Thr-AMP and then transferred to the acceptor end of tRNA(Thr). Also edits incorrectly charged L-seryl-tRNA(Thr). The polypeptide is Threonine--tRNA ligase (Prochlorococcus marinus (strain MIT 9303)).